The following is an 838-amino-acid chain: Axin-2 (838 aa).

Residues 1-75 form a disordered region; sequence MSSAVLVTLL…EGRASPDSPL (75 aa). Positions 21 to 30 match the Tankyrase-binding motif motif; the sequence is APRPPVPGEE. A compositionally biased stretch (polar residues) spans 42–55; sequence KVQSTKPMPVSSNA. Over residues 56–69 the composition is skewed to basic and acidic residues; that stretch reads RRNEDGLGEPEGRA. The region spanning 81 to 200 is the RGS domain; sequence SLHSLLGDQD…LTSDIYLEYV (120 aa). Disordered regions lie at residues 300–333, 398–435, 450–483, 568–682, and 712–744; these read SELS…KKQL, IRED…EEDP, PGCQ…LLPT, GSRG…AMPP, and VASQ…DHKE. Over residues 303–318 the composition is skewed to low complexity; it reads SSDALTDDSMSMTDSS. Positions 327–413 are interaction with GSK3B; sequence MGSKKQLQRE…KEGSEQALSS (87 aa). The interaction with beta-catenin stretch occupies residues 413–476; sequence SRDGAPVQHP…PDHHHHHHQQ (64 aa). Over residues 727–737 the composition is skewed to polar residues; the sequence is AGPTSFSNPSL. Residues 756–838 form the DIX domain; it reads ASELIVTYFF…RILGKVERID (83 aa).

In terms of assembly, interacts with SMAD7 and RNF111. Interacts with ANKRD6. Interacts with glycogen synthase kinase-3 beta (GSK3B) and beta-catenin. The interaction between axin and beta-catenin occurs via the armadillo repeats contained in beta-catenin. Interacts with SIAH1. Interacts with SIAH2. ADP-ribosylated by tankyrase TNKS and TNKS2. Poly-ADP-ribosylated protein is recognized by RNF146, followed by ubiquitination and subsequent activation of the Wnt signaling pathway. In terms of processing, ubiquitinated by RNF146 when poly-ADP-ribosylated, leading to its degradation and subsequent activation of the Wnt signaling pathway. Deubiquitinated by USP34, deubiquitinated downstream of beta-catenin stabilization step: deubiquitination is important Wnt signaling to positively regulate beta-catenin (CTNBB1)-mediated transcription. Post-translationally, probably phosphorylated by GSK3B and dephosphorylated by PP2A. As to expression, expressed in lung and thymus.

It is found in the cytoplasm. Inhibitor of the Wnt signaling pathway. Down-regulates beta-catenin. Probably facilitate the phosphorylation of beta-catenin and APC by GSK3B. This is Axin-2 (Axin2) from Rattus norvegicus (Rat).